The chain runs to 690 residues: MSSNQEPLVEGKIKDKHSETHGFEVDVNQMMDTMIKSVYSSKELFLRELVSNSSDACDKLKALYFQLREKGCVLDPVTSLGIEIIPNKDNRTLTIKDNGIGMTKPDLMNFIGTIASSGTKKFREEMKEKGNSADASNLIGQFGLGFYSSYLVAERVDLITKHPSDEALVWTSTGRDVYTIEEYDGEPFAHGTSLVLYIKEGEEEFLDPKRISEIVKKYSLFVFYPIYTYVEKEIEEPEEKKDEEKEDEKVEEETAEPRVEEVREKRLKKVTEREQINVEKPLWKRNIKEVPEEELKSFYKTVSGDWDDFLAVDFWHIEGLLSIELLMFIPKRARFDMFNKNKKNNNIKLYCKNVFVTDDFGDAIPEWMSFVSGVVASDDIPMNISREMIQGTNVMKLVKKTLPQKIFEMIGKLALDAEKYKTFYKEFGNCLKMAIGEASEGQQDGYAKCLRYFTTKSGEEAISLDTYVERMAPNQKQIYVITGLSKEQVKSNPALDAFQKYEVIYMHEVMDEVMLRGLKKYKGHTIQRITSEGVELPEDEASNEEVVKSFEEFCKKVKDILSSKVEKVTVNPRLVSVPAVISTTKYSLSGTMENIMKSQPVTEANPFAAMTAVSKKIFEMNPNHQLVKNLKALFDSNEIEKMNRILEVFFETVLIHNGFVLSDPKGFCANVFDFLCSEEVRCEEPVEEVQ.

Residues N52, D97, and F146 each contribute to the ATP site. The interval 235-257 (EEPEEKKDEEKEDEKVEEETAEP) is disordered. A compositionally biased stretch (acidic residues) spans 244–254 (EKEDEKVEEET). Position 386 (R386) interacts with ATP. A TPR repeat-binding motif is present at residues 686–690 (VEEVQ).

The protein belongs to the heat shock protein 90 family. As to quaternary structure, homodimer.

It localises to the cytoplasm. Molecular chaperone that promotes the maturation, structural maintenance and proper regulation of specific target proteins involved in cell cycle control and signal transduction. Undergoes a functional cycle that is linked to its ATPase activity. The nucleotide-free form of the dimer is found in an open conformation in which the N-termini are not dimerized and the complex is ready for client protein binding. Binding of ATP induces large conformational changes, resulting in the formation of a ring-like closed structure in which the N-terminal domains associate intramolecularly with the middle domain and also dimerize with each other, stimulating their intrinsic ATPase activity and acting as a clamp on the substrate. Finally, ATP hydrolysis results in the release of the substrate. This cycle probably induces conformational changes in the client proteins, thereby causing their activation. Interacts dynamically with various co-chaperones that modulate its substrate recognition, ATPase cycle and chaperone function. Required for growth at high temperatures. This is Heat shock protein 90 (HSP90) from Encephalitozoon cuniculi (strain GB-M1) (Microsporidian parasite).